Reading from the N-terminus, the 214-residue chain is MSGTFISFEGPDGAGKTSALQAITTQIKPVLGDQLVITREPGGNPISESIRAIILDRANTAMDYRTEALLYAAARRQHLAQTILPALAADKLVLCDRYVDSSVAYQGAGRQIGEDAVAQMNTFATDGLLPAVTVYFDVPAEIGLRRIQAHRDPQKVDRLDVEQAAFHDRVRAAYLRLQAAHPDRIKLIDATQKREAVVTTALTLIKQAAQNYFD.

Residue Gly10 to Thr17 participates in ATP binding.

The protein belongs to the thymidylate kinase family.

The catalysed reaction is dTMP + ATP = dTDP + ADP. In terms of biological role, phosphorylation of dTMP to form dTDP in both de novo and salvage pathways of dTTP synthesis. This chain is Thymidylate kinase, found in Levilactobacillus brevis (strain ATCC 367 / BCRC 12310 / CIP 105137 / JCM 1170 / LMG 11437 / NCIMB 947 / NCTC 947) (Lactobacillus brevis).